Consider the following 245-residue polypeptide: Probable transcriptional regulatory protein APH_0480 (245 aa).

Belongs to the TACO1 family.

It is found in the cytoplasm. In Anaplasma phagocytophilum (strain HZ), this protein is Probable transcriptional regulatory protein APH_0480.